Reading from the N-terminus, the 195-residue chain is Imidazoleglycerol-phosphate dehydratase (195 aa).

This sequence belongs to the imidazoleglycerol-phosphate dehydratase family.

It is found in the cytoplasm. It catalyses the reaction D-erythro-1-(imidazol-4-yl)glycerol 3-phosphate = 3-(imidazol-4-yl)-2-oxopropyl phosphate + H2O. It functions in the pathway amino-acid biosynthesis; L-histidine biosynthesis; L-histidine from 5-phospho-alpha-D-ribose 1-diphosphate: step 6/9. This chain is Imidazoleglycerol-phosphate dehydratase, found in Methylorubrum populi (strain ATCC BAA-705 / NCIMB 13946 / BJ001) (Methylobacterium populi).